Here is a 316-residue protein sequence, read N- to C-terminus: Serine protease 45 (316 aa).

Positions methionine 1–glycine 38 are cleaved as a signal peptide. Residues tryptophan 49–serine 290 form the Peptidase S1 domain. Cysteine 74 and cysteine 90 are disulfide-bonded. Catalysis depends on histidine 89, which acts as the Charge relay system. Residue asparagine 110 is glycosylated (N-linked (GlcNAc...) asparagine). Aspartate 137 (charge relay system) is an active-site residue. N-linked (GlcNAc...) asparagine glycans are attached at residues asparagine 162 and asparagine 186. 3 cysteine pairs are disulfide-bonded: cysteine 171/cysteine 248, cysteine 206/cysteine 229, and cysteine 238/cysteine 266. Residue serine 242 is the Charge relay system of the active site.

This sequence belongs to the peptidase S1 family.

The protein localises to the secreted. The polypeptide is Serine protease 45 (PRSS45) (Bos taurus (Bovine)).